We begin with the raw amino-acid sequence, 411 residues long: UPF0761 membrane protein PSPA7_4558 (411 aa).

Transmembrane regions (helical) follow at residues 36–56, 92–112, 132–152, 174–194, 207–229, and 244–264; these read LFAVVPMMTVMFSMLSLIPAF, HLTWVGVVFLAVTAFTMLVTI, FLLYWAILSLGPLLLGAGFAV, LLGLMPLAFSVAAFTLLYSAV, GGMFTAVLFEAAKTLFGLYVSLF, and IFLLWIYLSWMIVLFGAVLVC.

It belongs to the UPF0761 family.

It localises to the cell inner membrane. This is UPF0761 membrane protein PSPA7_4558 from Pseudomonas paraeruginosa (strain DSM 24068 / PA7) (Pseudomonas aeruginosa (strain PA7)).